We begin with the raw amino-acid sequence, 413 residues long: Phosphoglycerate kinase (413 aa).

Residues 24–26 (DFN), Arg-39, 62–65 (HLSR), Arg-123, and Arg-165 each bind substrate. ATP is bound by residues Lys-216, Glu-343, and 369-372 (GGDS).

The protein belongs to the phosphoglycerate kinase family. In terms of assembly, monomer.

The protein resides in the cytoplasm. The enzyme catalyses (2R)-3-phosphoglycerate + ATP = (2R)-3-phospho-glyceroyl phosphate + ADP. The protein operates within carbohydrate degradation; glycolysis; pyruvate from D-glyceraldehyde 3-phosphate: step 2/5. This is Phosphoglycerate kinase from Mycoplasmoides gallisepticum (strain R(low / passage 15 / clone 2)) (Mycoplasma gallisepticum).